Here is a 410-residue protein sequence, read N- to C-terminus: Transcription factor rglT (410 aa).

Residues 1–24 (MQFDSLPLPPSSSHDTTSVPPLKR) are disordered. Positions 28-55 (CDECRKRKLKCSGEATGCSRCLKQSLPC) form a DNA-binding region, zn(2)-C6 fungal-type. Positions 353-372 (HRTRTVESPNEPGSCSPVSH) are disordered. Over residues 358-369 (VESPNEPGSCSP) the composition is skewed to polar residues.

Its subcellular location is the nucleus. In terms of biological role, transcription factor that is involved in protection against oxidative stress. Binds to promoter regions of the gliotoxin (GT) biosynthetic genes gliZ, gliF, gliT, gliM, gliA and gtmA. Two related but different DNA motifs (5'-TCGG-3' and 5'-CGGNCGG-3') are specifically enriched among rglT binding sites in GT-inducing conditions. Also indirectly regulates the expression of gliP, gliG, gliH and gliN. Plays a key role in resistance against exogenously-added GT and GT biosynthesis, mainly through the direct regulation of gliT. Furthermore, rglT is important for virulence in chemotherapeutic mice with invasive pulmonary aspergillosis (IPA). In Aspergillus fumigatus (strain CBS 144.89 / FGSC A1163 / CEA10) (Neosartorya fumigata), this protein is Transcription factor rglT.